Reading from the N-terminus, the 311-residue chain is Acetyl-coenzyme A carboxylase carboxyl transferase subunit alpha (311 aa).

One can recognise a CoA carboxyltransferase C-terminal domain in the interval asparagine 36–lysine 286.

The protein belongs to the AccA family. Acetyl-CoA carboxylase is a heterohexamer composed of biotin carboxyl carrier protein (AccB), biotin carboxylase (AccC) and two subunits each of ACCase subunit alpha (AccA) and ACCase subunit beta (AccD).

It localises to the cytoplasm. The enzyme catalyses N(6)-carboxybiotinyl-L-lysyl-[protein] + acetyl-CoA = N(6)-biotinyl-L-lysyl-[protein] + malonyl-CoA. It participates in lipid metabolism; malonyl-CoA biosynthesis; malonyl-CoA from acetyl-CoA: step 1/1. Functionally, component of the acetyl coenzyme A carboxylase (ACC) complex. First, biotin carboxylase catalyzes the carboxylation of biotin on its carrier protein (BCCP) and then the CO(2) group is transferred by the carboxyltransferase to acetyl-CoA to form malonyl-CoA. The polypeptide is Acetyl-coenzyme A carboxylase carboxyl transferase subunit alpha (Campylobacter curvus (strain 525.92)).